The primary structure comprises 334 residues: CRISPR-associated endonuclease Cas1 (334 aa).

E161, H226, and E241 together coordinate Mn(2+).

This sequence belongs to the CRISPR-associated endonuclease Cas1 family. Homodimer, forms a heterotetramer with a Cas2 homodimer. It depends on Mg(2+) as a cofactor. Mn(2+) serves as cofactor.

CRISPR (clustered regularly interspaced short palindromic repeat), is an adaptive immune system that provides protection against mobile genetic elements (viruses, transposable elements and conjugative plasmids). CRISPR clusters contain spacers, sequences complementary to antecedent mobile elements, and target invading nucleic acids. CRISPR clusters are transcribed and processed into CRISPR RNA (crRNA). Acts as a dsDNA endonuclease. Involved in the integration of spacer DNA into the CRISPR cassette. The chain is CRISPR-associated endonuclease Cas1 from Methanothermobacter thermautotrophicus (strain ATCC 29096 / DSM 1053 / JCM 10044 / NBRC 100330 / Delta H) (Methanobacterium thermoautotrophicum).